The following is a 623-amino-acid chain: Kelch-like protein diablo (623 aa).

The interval 1-54 is disordered; the sequence is MGDLPGSGSTAQPRDAAVTGTGGNSTAGGGSSVGSTAVDRPPSPARLSHTSEKH. Threonine 19 carries the phosphothreonine modification. Gly residues predominate over residues 20-32; it reads GTGGNSTAGGGSS. The region spanning 72–139 is the BTB domain; that stretch reads CDVVLNVGGR…CYTAHIMVEE (68 aa). Residues 174–276 enclose the BACK domain; that stretch reads CLGIRAFADT…SPKFLVGTVG (103 aa). 6 Kelch repeats span residues 323 to 369, 371 to 417, 418 to 464, 466 to 511, 513 to 558, and 559 to 605; these read VLFA…VLND, LYAV…VLDG, FLYA…VLGG, LYAI…VFNN, IYAV…VVNG, and QLYA…VMRA.

It participates in protein modification; protein ubiquitination. In terms of biological role, probable substrate-specific adapter of an E3 ubiquitin-protein ligase complex which mediates the ubiquitination and subsequent proteasomal degradation of target proteins. May have a role in synapse differentiation and growth. The polypeptide is Kelch-like protein diablo (Drosophila erecta (Fruit fly)).